The sequence spans 655 residues: Alpha-L-iduronidase (655 aa).

The N-terminal stretch at 1 to 25 is a signal peptide; it reads MRPPGPRAPGLALLAALLAAPRALA. Proline 53, leucine 55, and histidine 57 together coordinate alpha-D-mannopyranose. Histidine 90 contributes to the alpha-L-iduronate binding site. A glycan (N-linked (GlcNAc...) asparagine) is linked at asparagine 109. Residues asparagine 180 and glutamate 181 each contribute to the alpha-L-iduronate site. Glutamate 181 functions as the Proton donor in the catalytic mechanism. Asparagine 189 and asparagine 242 each carry an N-linked (GlcNAc...) asparagine glycan. Alpha-L-iduronate-binding residues include lysine 263, glutamate 298, and glycine 304. The active-site Nucleophile is the glutamate 298. An alpha-D-mannopyranose-binding site is contributed by tryptophan 305. N-linked (GlcNAc...) asparagine glycosylation is present at asparagine 335. Alpha-L-iduronate contacts are provided by aspartate 348 and arginine 362. 2 N-linked (GlcNAc...) asparagine glycosylation sites follow: asparagine 371 and asparagine 414. Cysteines 540 and 576 form a disulfide.

The protein belongs to the glycosyl hydrolase 39 family. Monomer. In terms of processing, a smaller 63 kDa protein probably arises from IDUA protein by proteolytic cleavage. Post-translationally, N-glycosylation contributes to substrate binding and is required for full enzymatic activity. Detected in testis (at protein level). Expressed ubiquitously.

Its subcellular location is the lysosome. The catalysed reaction is Hydrolysis of unsulfated alpha-L-iduronosidic linkages in dermatan sulfate.. This chain is Alpha-L-iduronidase (IDUA), found in Canis lupus familiaris (Dog).